We begin with the raw amino-acid sequence, 638 residues long: Chaperone protein HtpG (638 aa).

The interval 1–345 (MTTETFEFQV…AQDLSLNVSR (345 aa)) is a; substrate-binding. The interval 346–560 (EILQQDRHIR…AGELTPALEN (215 aa)) is b. The segment at 561-638 (MYRAMGQEVP…LMADRLERTL (78 aa)) is c.

This sequence belongs to the heat shock protein 90 family. As to quaternary structure, homodimer.

The protein localises to the cytoplasm. Its function is as follows. Molecular chaperone. Has ATPase activity. The protein is Chaperone protein HtpG of Streptomyces coelicolor (strain ATCC BAA-471 / A3(2) / M145).